A 465-amino-acid chain; its full sequence is Sodium-coupled neutral amino acid transporter 7 (465 aa).

A run of 11 helical transmembrane segments spans residues alanine 54–phenylalanine 74, alanine 82–alanine 102, isoleucine 128–isoleucine 148, phenylalanine 177–glycine 197, threonine 204–proline 224, phenylalanine 244–phenylalanine 264, tryptophan 275–valine 295, valine 318–leucine 338, isoleucine 370–isoleucine 390, isoleucine 394–isoleucine 414, and serine 427–glycine 447.

The protein belongs to the amino acid/polyamine transporter 2 family.

The protein localises to the lysosome membrane. It is found in the cell projection. Its subcellular location is the axon. The catalysed reaction is L-asparagine(in) + Na(+)(in) = L-asparagine(out) + Na(+)(out). It catalyses the reaction L-glutamine(in) + Na(+)(in) = L-glutamine(out) + Na(+)(out). In terms of biological role, symporter that selectively cotransports sodium ions and amino acids, such as L-glutamine and L-asparagine from the lysosome into the cytoplasm and may participates in mTORC1 activation. The transport activity requires an acidic lysosomal lumen. The chain is Sodium-coupled neutral amino acid transporter 7 from Danio rerio (Zebrafish).